Consider the following 227-residue polypeptide: UPF0173 metal-dependent hydrolase Bsph_4138 (227 aa).

Belongs to the UPF0173 family.

The polypeptide is UPF0173 metal-dependent hydrolase Bsph_4138 (Lysinibacillus sphaericus (strain C3-41)).